Here is a 474-residue protein sequence, read N- to C-terminus: Pyruvate kinase (474 aa).

Arg33 is a binding site for substrate. Asn35, Ser37, and Asp67 together coordinate K(+). 35 to 38 serves as a coordination point for ATP; sequence NFSH. The ATP site is built by Arg74 and Lys155. Glu220 serves as a coordination point for Mg(2+). The substrate site is built by Gly243, Asp244, and Thr276. Asp244 is a Mg(2+) binding site.

This sequence belongs to the pyruvate kinase family. Homotetramer. Requires Mg(2+) as cofactor. It depends on K(+) as a cofactor.

It carries out the reaction pyruvate + ATP = phosphoenolpyruvate + ADP + H(+). It functions in the pathway carbohydrate degradation; glycolysis; pyruvate from D-glyceraldehyde 3-phosphate: step 5/5. This Corynebacterium efficiens (strain DSM 44549 / YS-314 / AJ 12310 / JCM 11189 / NBRC 100395) protein is Pyruvate kinase (pyk).